Reading from the N-terminus, the 257-residue chain is Ribosome-associated protein quality control protein P2 (257 aa).

Positions 1-74 (MSDIYQHFRK…RAERKRAILF (74 aa)) are N-terminal domain. Residues 87-166 (LQAFNVRYAD…EKIDLSDLNI (80 aa)) are central region. The 71-residue stretch at 181–251 (LRLDAVCASM…GKTKKDKWRV (71 aa)) folds into the S4 RNA-binding domain.

In the presence of chloramphenicol (a translation elongation inhibitor), but not erythromycin or lincomycin, associates with 50S ribosomal subunits with or without a tRNA in the P-site. The S4 domain binds in a similar position to RqcP.

The protein resides in the cytoplasm. Functionally, part of the ribosome quality control system (RQC), a ribosome-associated complex that mediates the extraction of incompletely synthesized nascent chains from stalled ribosomes and their subsequent degradation. RqcH recruits Ala-charged tRNA, and with RqcP directs the elongation of stalled nascent chains on 50S ribosomal subunits, leading to non-templated C-terminal alanine extensions (Ala tail). The Ala tail promotes nascent chain degradation. RqcP2 (YlmH) overexpression can compensate for RqcP's role in Ala tailing during RQC, restoring Ala tail addition to peptides in stalled ribosomes. Overexpression complements a double ssrA-rqcP double deletion, but not an ssrA-rqcH double deletion. In terms of biological role, the majority of tagged protein is associated with tRNA-less 50S subunits, suggesting it might also play a role in late stage 50S subunit biogenesis. The sequence is that of Ribosome-associated protein quality control protein P2 from Bacillus subtilis (strain 168).